Consider the following 191-residue polypeptide: Thymidylate kinase (191 aa).

7–14 (GIDGVGKS) is an ATP binding site.

The protein belongs to the thymidylate kinase family.

The catalysed reaction is dTMP + ATP = dTDP + ADP. Its function is as follows. Phosphorylation of dTMP to form dTDP in both de novo and salvage pathways of dTTP synthesis. The sequence is that of Thymidylate kinase from Helicobacter acinonychis (strain Sheeba).